Consider the following 113-residue polypeptide: Hydrogenase maturation factor HypA (113 aa).

Residue His2 coordinates Ni(2+). Residues Cys73, Cys76, Cys89, and Cys92 each coordinate Zn(2+).

It belongs to the HypA/HybF family.

Functionally, involved in the maturation of [NiFe] hydrogenases. Required for nickel insertion into the metal center of the hydrogenase. In Cereibacter sphaeroides (strain KD131 / KCTC 12085) (Rhodobacter sphaeroides), this protein is Hydrogenase maturation factor HypA.